A 380-amino-acid chain; its full sequence is SAM and SH3 domain-containing protein 3 (380 aa).

The disordered stretch occupies residues 1-174; it reads MLRRKPSNAS…STAPQYTGPF (174 aa). Low complexity predominate over residues 22-41; sequence LQRSSSFKDFAKSKPSSPVV. 3 positions are modified to phosphoserine: Ser-27, Ser-34, and Ser-42. At Thr-61 the chain carries Phosphothreonine. The span at 84-93 shows a compositional bias: basic residues; that stretch reads MNRKTGKKMV. The residue at position 97 (Ser-97) is a Phosphoserine. Residue Thr-103 is modified to Phosphothreonine. Ser-110 carries the post-translational modification Phosphoserine. Thr-112 carries the post-translational modification Phosphothreonine. 2 positions are modified to phosphoserine: Ser-113 and Ser-120. Residues 143-158 show a composition bias toward polar residues; sequence RQASTGSELCSPSPGS. The 62-residue stretch at 173-234 folds into the SH3 domain; it reads PFCGRARVHT…KFIYVDVLPE (62 aa). One can recognise an SAM domain in the interval 252–316; it reads PKPKTLHELL…LTAAELLLDY (65 aa). Residue Thr-318 is modified to Phosphothreonine. The span at 318 to 327 shows a compositional bias: acidic residues; sequence TGSEEAEEGT. Residues 318–380 form a disordered region; that stretch reads TGSEEAEEGT…LHGLSLSGAP (63 aa). Ser-320 is modified (phosphoserine).

It belongs to the SASH family.

Functionally, may function as a signaling adapter protein in lymphocytes. The sequence is that of SAM and SH3 domain-containing protein 3 from Bos taurus (Bovine).